Consider the following 101-residue polypeptide: Large ribosomal subunit protein P1 (101 aa).

The interval 65-89 (AAPAAAPAEEPKEEKKEEKKEEDTT) is disordered. Residues 73 to 87 (EEPKEEKKEEKKEED) show a composition bias toward basic and acidic residues.

This sequence belongs to the eukaryotic ribosomal protein P1/P2 family. Part of the 50S ribosomal subunit. Homodimer, it forms part of the ribosomal stalk which helps the ribosome interact with GTP-bound translation factors. Forms a heptameric uL10/P0(P1)2(P1)2(P1)2 complex, where uL10/P0 forms an elongated spine to which the P1 dimers bind in a sequential fashion.

Functionally, forms part of the ribosomal stalk, playing a central role in the interaction of the ribosome with GTP-bound translation factors. This Methanothermococcus thermolithotrophicus (Methanococcus thermolithotrophicus) protein is Large ribosomal subunit protein P1.